The chain runs to 254 residues: Thiazole synthase (254 aa).

The active-site Schiff-base intermediate with DXP is the lysine 96. 1-deoxy-D-xylulose 5-phosphate contacts are provided by residues glycine 157, 183-184 (AG), and 205-206 (NT).

The protein belongs to the ThiG family. Homotetramer. Forms heterodimers with either ThiH or ThiS.

The protein localises to the cytoplasm. It catalyses the reaction [ThiS sulfur-carrier protein]-C-terminal-Gly-aminoethanethioate + 2-iminoacetate + 1-deoxy-D-xylulose 5-phosphate = [ThiS sulfur-carrier protein]-C-terminal Gly-Gly + 2-[(2R,5Z)-2-carboxy-4-methylthiazol-5(2H)-ylidene]ethyl phosphate + 2 H2O + H(+). It participates in cofactor biosynthesis; thiamine diphosphate biosynthesis. Functionally, catalyzes the rearrangement of 1-deoxy-D-xylulose 5-phosphate (DXP) to produce the thiazole phosphate moiety of thiamine. Sulfur is provided by the thiocarboxylate moiety of the carrier protein ThiS. In vitro, sulfur can be provided by H(2)S. This Clostridium perfringens (strain 13 / Type A) protein is Thiazole synthase.